We begin with the raw amino-acid sequence, 318 residues long: UDP-3-O-acylglucosamine N-acyltransferase (318 aa).

The active-site Proton acceptor is His231.

It belongs to the transferase hexapeptide repeat family. LpxD subfamily. Homotrimer.

It catalyses the reaction a UDP-3-O-[(3R)-3-hydroxyacyl]-alpha-D-glucosamine + a (3R)-hydroxyacyl-[ACP] = a UDP-2-N,3-O-bis[(3R)-3-hydroxyacyl]-alpha-D-glucosamine + holo-[ACP] + H(+). It participates in bacterial outer membrane biogenesis; LPS lipid A biosynthesis. Catalyzes the N-acylation of UDP-3-O-acylglucosamine using 3-hydroxyacyl-ACP as the acyl donor. Is involved in the biosynthesis of lipid A, a phosphorylated glycolipid that anchors the lipopolysaccharide to the outer membrane of the cell. The chain is UDP-3-O-acylglucosamine N-acyltransferase from Campylobacter jejuni subsp. doylei (strain ATCC BAA-1458 / RM4099 / 269.97).